The sequence spans 227 residues: MIRLVLLDIEGTTLPISFVRDVMFPYAAKALPALMQDHTNPIVVGARADIVMEHPGQDPLKVCQDWMKADVKAAPLKTLQGLTWRQGFEDGTLQADLYPDVPPALKAWSKGGLRLAVYSSGSIPSQKLLYGHTAQGDLTPLFEDFFDLSTGGKKDAASYEKITAAVGLPADEILFLSDIGAELDAAQRAGLSVCQLVREQDGTVPHPGVPQAPDLNAVSTQFGLPVA.

The protein belongs to the HAD-like hydrolase superfamily. MasA/MtnC family. As to quaternary structure, monomer. It depends on Mg(2+) as a cofactor.

The catalysed reaction is 5-methylsulfanyl-2,3-dioxopentyl phosphate + H2O = 1,2-dihydroxy-5-(methylsulfanyl)pent-1-en-3-one + phosphate. It functions in the pathway amino-acid biosynthesis; L-methionine biosynthesis via salvage pathway; L-methionine from S-methyl-5-thio-alpha-D-ribose 1-phosphate: step 3/6. It participates in amino-acid biosynthesis; L-methionine biosynthesis via salvage pathway; L-methionine from S-methyl-5-thio-alpha-D-ribose 1-phosphate: step 4/6. Bifunctional enzyme that catalyzes the enolization of 2,3-diketo-5-methylthiopentyl-1-phosphate (DK-MTP-1-P) into the intermediate 2-hydroxy-3-keto-5-methylthiopentenyl-1-phosphate (HK-MTPenyl-1-P), which is then dephosphorylated to form the acireductone 1,2-dihydroxy-3-keto-5-methylthiopentene (DHK-MTPene). The sequence is that of Enolase-phosphatase E1 from Gluconobacter oxydans (strain 621H) (Gluconobacter suboxydans).